The following is a 938-amino-acid chain: MTLLGSEHSLLIRRKFRSVLQLRLQQRRTQEQLANQGLIPPLKSPTEFHDPRKKLDSAKTEDSLRRKVRNRSDRASLVNMHILQASTAERSIPTAQMKLKRARLADDLNEKIALRPGPLELVEKNILPMDSSVKEAIKGTEVSLSKAADAFAFEDDSSRDGLSPDQARSEDPQGSGGSTPDIKSTEAPLAGPLDTIQDLTPGSESDKNDTASQLSNQSDSGKQVLGPLSTPIPVHTAVKSKSLGDSKNRHKKPKDPKPKVKKLKYHQYIPPDQKAEKSPPPMDSAYARLLQQQQLFLQLQILSQQQQQQQQQQQQQQQQQQQQRFSYPGMHQAHLKEPNEQMTRNPNSSSTPLNNTPLSPVKNSLSGQTGVSSLKPGPLPPNLDDLKVSELRQQLRIRGLPVSGTKTALVDRLRPFQDCAGNPVPNFGDITTVTFPVTPNTLPSYQSSPSGFYHFGSTSSSPPISPASSDLSAAGSLPDTFTDASPGFGLHASPVPACTDESLLSSLNGGSGPSEPDGLDSEKDKMLVEKQKVINQLTWKLRQEQRQVEELRMQLQKQKSGCNDQKPLPFLATTIKQEDVSSCPFAAQQASGKGQGHSSDSPPPACETAQLLPHCVESSGQTHVLSSTFLSPQCSPQHSPLGTLKSPQHISLPPSPNNHYFLASSSGAQRENHGVSSPNSSQGCAQMTGLQSSDKVGPTFSIPSPTFPKSSPTVPEITQPPSYEDAVKQQMTRSQQMDELLDVLIESGEMPADAREDHSCLQKIPKIPGSSCSPTTILPKSSASFEQASSGGQISFDHYATDSEEHLEVLLNSHSPIGKVSDVTLLKIGSEEPPFDGIMDGFPGKAAEDLFSAHELLPGPLSPMHTQLSPPSVDSSGLQLSFTESPWETMEWLDLTPPSSTPGFSNLTSSGPSIFNIDFLDVTDLNLNSPMDLHLQQW.

The short motif at 12 to 27 (IRRKFRSVLQLRLQQR) is the MEF2C-binding element. 3 RPEL repeats span residues 18–43 (SVLQ…PPLK), 62–87 (DSLR…QAST), and 106–131 (DDLN…PMDS). The disordered stretch occupies residues 37-64 (GLIPPLKSPTEFHDPRKKLDSAKTEDSL). The segment covering 46–64 (TEFHDPRKKLDSAKTEDSL) has biased composition (basic and acidic residues). The interval 153–205 (FEDDSSRDGLSPDQARSEDPQGSGGSTPDIKSTEAPLAGPLDTIQDLTPGSES) is HDAC5-binding. Disordered stretches follow at residues 155 to 282 (DDSS…PPPM) and 339 to 381 (NEQM…PLPP). Positions 210–221 (TASQLSNQSDSG) are enriched in polar residues. Positions 248 to 265 (NRHKKPKDPKPKVKKLKY) are enriched in basic residues. Low complexity predominate over residues 345–360 (NPNSSSTPLNNTPLSP). Polar residues predominate over residues 361 to 372 (VKNSLSGQTGVS). The SAP domain maps to 383–417 (LDDLKVSELRQQLRIRGLPVSGTKTALVDRLRPFQ). Phosphoserine; by GSK3-beta occurs at positions 457, 461, 465, and 469. The segment at 501-521 (ESLLSSLNGGSGPSEPDGLDS) is disordered. Residues 522-566 (EKDKMLVEKQKVINQLTWKLRQEQRQVEELRMQLQKQKSGCNDQK) are a coiled coil. The interval 586 to 606 (AAQQASGKGQGHSSDSPPPAC) is disordered. The span at 588–600 (QQASGKGQGHSSD) shows a compositional bias: polar residues. Phosphoserine; by GSK3-beta is present on residues Ser627, Ser631, Ser635, and Ser639. 2 stretches are compositionally biased toward polar residues: residues 667 to 694 (GAQR…QSSD) and 701 to 713 (SIPS…SSPT). The interval 667–734 (GAQRENHGVS…DAVKQQMTRS (68 aa)) is disordered. The segment at 717–938 (ITQPPSYEDA…SPMDLHLQQW (222 aa)) is required for interaction with and ubiquitination by STUB1. Phosphoserine; by MAPK1 and MAPK3 occurs at positions 815, 862, and 869. At Thr896 the chain carries Phosphothreonine; by MAPK1 and MAPK3.

Homodimer. Interacts with MLLT7/FOXO4. Interacts with SRF, its association does not depend on specific DNA sequences for ternary complex formation. Interacts (via C-terminal) with EP300 (via the CREB-binding domain). Interacts with HDAC4 and HDAC5. Interacts with MEF2C. Interacts (via C-terminus) with STUB1/CHIP. Interacts with PURB. Ubiquitinated; by STUB1/CHIP at the C-terminus, leading to its degradation by the proteasome. Phosphorylation by GSK3B is required for STUB1/CHIP-mediated ubiquitination. Post-translationally, phosphorylation negatively regulates transcriptional activity. Phosphorylated; by GSK3B. As to expression, abundantly expressed in the heart, aorta media and bladder, weakly expressed in the stomach, intestine and lung.

Its subcellular location is the nucleus. Its function is as follows. Smooth muscle cells (SM) and cardiac muscle cells-specific transcriptional factor which uses the canonical single or multiple CArG boxes DNA sequence. Acts as a cofactor of serum response factor (SRF) with the potential to modulate SRF-target genes. Plays a crucial role in cardiogenesis, urinary bladder development, and differentiation of the smooth muscle cell lineage (myogenesis). Positively regulates the transcription of genes involved in vascular smooth muscle contraction. This is Myocardin (Myocd) from Rattus norvegicus (Rat).